Consider the following 704-residue polypeptide: Ankyrin repeat and LEM domain-containing protein 1 homolog (704 aa).

The segment at 1-29 is disordered; it reads MPPNGAITTTPRSRMPPTTPSSGKSRPKK. The span at 8-22 shows a compositional bias: low complexity; sequence TTTPRSRMPPTTPSS. 2 ANK repeats span residues 28–59 and 63–93; these read KKET…NVNA and DGAT…PMSA. Disordered stretches follow at residues 247 to 293, 314 to 358, and 381 to 421; these read NEDV…SQET, NAGL…ANTT, and SKSA…TTVD. Residues 276–288 show a composition bias toward basic residues; sequence RKQRTPVNHHKRS. 2 stretches are compositionally biased toward low complexity: residues 329–346 and 384–405; these read EPAI…TPKT and AKSS…SFSS. The region spanning 425–470 is the LEM domain; it reads IRKIRRLREGELKSELKKFGISPAGPLDARTRRLYEKKLLIERRKI. The GIY-YIG domain occupies 525–635; sequence YNAFCYLIMD…AVKLKNLRNK (111 aa).

Phosphorylated. Phosphorylated during telophase when localized at the midbody.

It localises to the cytoplasm. The protein localises to the nucleus. The protein resides in the chromosome. Its subcellular location is the midbody. It is found in the cytoskeleton. It localises to the spindle. With respect to regulation, inhibited by EDTA. Endonuclease which, in association with baf-1, plays an essential role during embryogenesis in the DNA repair response following DNA damage probably by ensuring proper chromosome segregation. Also required during postembryonic cell divisions after DNA damage caused by ionizing radiation to ensure normal cell proliferation. Resolves chromatin bridges in late mitosis that result from incomplete DNA replication, defective chromosome condensation or unresolved recombination intermediates. Together with brc-1, contributes to genome integrity by resolving mitotic chromatin bridges that result from incomplete processing of DNA breaks. In parallel to the slx-1/mus-81 pathway, acts in processing early recombination intermediates in meiotic prophase I to prevent illegitimate recombination. Also involved in processing remaining, erroneous recombination intermediates that persist into the second meiotic division. This chain is Ankyrin repeat and LEM domain-containing protein 1 homolog, found in Caenorhabditis elegans.